Here is a 375-residue protein sequence, read N- to C-terminus: tRNA-specific 2-thiouridylase MnmA (375 aa).

Residues 16-23 (GMSGGVDS) and methionine 42 each bind ATP. Residues 102 to 104 (NPD) are interaction with target base in tRNA. Cysteine 107 (nucleophile) is an active-site residue. Cysteine 107 and cysteine 203 form a disulfide bridge. Glycine 131 contacts ATP. The tract at residues 153–155 (KDQ) is interaction with tRNA. Residue cysteine 203 is the Cysteine persulfide intermediate of the active site. Positions 315 to 316 (RY) are interaction with tRNA.

Belongs to the MnmA/TRMU family.

The protein resides in the cytoplasm. The catalysed reaction is S-sulfanyl-L-cysteinyl-[protein] + uridine(34) in tRNA + AH2 + ATP = 2-thiouridine(34) in tRNA + L-cysteinyl-[protein] + A + AMP + diphosphate + H(+). In terms of biological role, catalyzes the 2-thiolation of uridine at the wobble position (U34) of tRNA, leading to the formation of s(2)U34. This chain is tRNA-specific 2-thiouridylase MnmA, found in Pseudomonas aeruginosa (strain UCBPP-PA14).